The primary structure comprises 1462 residues: Serine/threonine-protein kinase HSL1 (1462 aa).

Disordered regions lie at residues 1-26 (MSTV…SSSM) and 41-69 (RLSQ…KLGR). The 266-residue stretch at 65–330 (WKLGRTLGRG…IDAILTHPLL (266 aa)) folds into the Protein kinase domain. Residues 71–79 (LGRGSTGRV) and lysine 94 contribute to the ATP site. The Proton acceptor role is filled by aspartate 201. Disordered regions lie at residues 412–450 (SNSF…HTTV), 471–540 (SAKG…TSVN), 598–637 (ENSK…TWSL), 992–1031 (EDEE…NYDF), 1095–1230 (KETL…QQTK), and 1269–1321 (NRAA…LQKE). Polar residues-rich tracts occupy residues 428-440 (PRST…TVTD) and 471-487 (SAKG…PNTP). The segment covering 510 to 526 (ASRSRNASSRSLKSNSS) has biased composition (low complexity). Residues 527-540 (TGRNGNNASVTSVN) show a composition bias toward polar residues. A compositionally biased stretch (pro residues) spans 610–620 (QLPPPPPPPIE). Residues 636-715 (SLARRERELA…KLQKHQSAHD (80 aa)) adopt a coiled-coil conformation. The segment covering 1095 to 1130 (KETLLKNHSSDEATIEVKEDNNEHDFNDKIKQHYDD) has biased composition (basic and acidic residues). Acidic residues predominate over residues 1131–1153 (NGDSEEDDEDEDEEEEDDDDDDD). Polar residues-rich tracts occupy residues 1165–1176 (HNYSLAEITSES), 1197–1218 (STGI…NNGD), and 1292–1302 (NISQPLSSPTK).

The protein belongs to the protein kinase superfamily. CAMK Ser/Thr protein kinase family. NIM1 subfamily. Post-translationally, phosphorylated throughout the cell cycle, except for the G1 phase.

It is found in the bud neck. The catalysed reaction is L-seryl-[protein] + ATP = O-phospho-L-seryl-[protein] + ADP + H(+). The enzyme catalyses L-threonyl-[protein] + ATP = O-phospho-L-threonyl-[protein] + ADP + H(+). Protein kinase involved in determination of morphology during the cell cycle of both yeast-form and hyphal cells via regulation of SWE1 and CDC28. Regulates pseudohypha formation, but is not required for septin ring organization or septum formation. Plays an essential role in virulence in a mouse model. This Candida albicans (strain SC5314 / ATCC MYA-2876) (Yeast) protein is Serine/threonine-protein kinase HSL1 (HSL1).